Reading from the N-terminus, the 123-residue chain is Small ribosomal subunit protein uS12 (123 aa).

Residues 1-22 (MATINQLVRQPRKRSVEKSDVP) form a disordered region. Residue Asp89 is modified to 3-methylthioaspartic acid. Residues 100-123 (GSLDTSGVKGRNQGRSKYGTKRPK) are disordered. The span at 111–123 (NQGRSKYGTKRPK) shows a compositional bias: basic residues.

It belongs to the universal ribosomal protein uS12 family. Part of the 30S ribosomal subunit. Contacts proteins S8 and S17. May interact with IF1 in the 30S initiation complex.

Its function is as follows. With S4 and S5 plays an important role in translational accuracy. In terms of biological role, interacts with and stabilizes bases of the 16S rRNA that are involved in tRNA selection in the A site and with the mRNA backbone. Located at the interface of the 30S and 50S subunits, it traverses the body of the 30S subunit contacting proteins on the other side and probably holding the rRNA structure together. The combined cluster of proteins S8, S12 and S17 appears to hold together the shoulder and platform of the 30S subunit. This is Small ribosomal subunit protein uS12 from Pseudomonas entomophila (strain L48).